A 356-amino-acid polypeptide reads, in one-letter code: Protein RecA (356 aa).

ATP is bound at residue 71 to 78 (GPESSGKT).

This sequence belongs to the RecA family.

The protein localises to the cytoplasm. Functionally, can catalyze the hydrolysis of ATP in the presence of single-stranded DNA, the ATP-dependent uptake of single-stranded DNA by duplex DNA, and the ATP-dependent hybridization of homologous single-stranded DNAs. It interacts with LexA causing its activation and leading to its autocatalytic cleavage. This is Protein RecA from Synechococcus elongatus (strain ATCC 33912 / PCC 7942 / FACHB-805) (Anacystis nidulans R2).